The following is a 1095-amino-acid chain: Formin-like protein 2 (1095 aa).

The GBD/FH3 domain occupies 23-469 (LPMPEPGELE…EAIQRQSTLE (447 aa)). Positions 381–478 (LLEDAETKNA…EKKIHELEKQ (98 aa)) form a coiled coil. Residues 521–602 (PSSGPLPPPP…PSAPPLPGTS (82 aa)) form a disordered region. Composition is skewed to pro residues over residues 524–534 (GPLPPPPPPLP), 548–576 (ATPPVPPPPPPPPPPPPPPPPPPPPPLPG), and 583–599 (PAPPLPPPPPPSAPPLP). One can recognise an FH2 domain in the interval 617–1008 (IKKPIKTKFR…LMEKLLEQEA (392 aa)).

This sequence belongs to the formin homology family. In terms of assembly, interacts with TCP11L2; this interaction promotes muscle-derived satellite cell (MDSC) migration and differentiation.

It localises to the cytoplasm. Functionally, plays a role in the regulation of cell morphology and cytoskeletal organization. Required in the cortical actin filament dynamics. In Bos taurus (Bovine), this protein is Formin-like protein 2.